Reading from the N-terminus, the 506-residue chain is Zinc finger and SCAN domain containing protein 4C (506 aa).

A disordered region spans residues 1–24; the sequence is MASQQAPAKDLQTNNLEFTPTDSS. The SCAN box domain occupies 37 to 119; that stretch reads SAQLNFSPSN…RFMESLTDEC (83 aa). 4 consecutive C2H2-type zinc fingers follow at residues 395–417, 424–446, 452–474, and 480–503; these read YKCE…QRTH, LLCV…EIIH, FKCS…EMIH, and YVCS…RNYH.

As to expression, embryonic stem (ES) cell-specific. Expressed in only 5% of ES cells at a given time, but nearly all ES cells express it at least once during 9 passages.

Its subcellular location is the nucleus. It localises to the chromosome. The protein resides in the telomere. In terms of biological role, embryonic stem (ES) cell-specific transcription factor required to regulate ES cell pluripotency. Binds telomeres and plays a key role in genomic stability in ES cells by regulating telomere elongation. Acts as an activator of spontaneous telomere sister chromatid exchange (T-SCE) and telomere elongation in undifferentiated ES cells. The polypeptide is Zinc finger and SCAN domain containing protein 4C (Zscan4c) (Mus musculus (Mouse)).